A 126-amino-acid chain; its full sequence is Large ribosomal subunit protein uL22 (126 aa).

The protein belongs to the universal ribosomal protein uL22 family. Part of the 50S ribosomal subunit.

Functionally, this protein binds specifically to 23S rRNA; its binding is stimulated by other ribosomal proteins, e.g. L4, L17, and L20. It is important during the early stages of 50S assembly. It makes multiple contacts with different domains of the 23S rRNA in the assembled 50S subunit and ribosome. The globular domain of the protein is located near the polypeptide exit tunnel on the outside of the subunit, while an extended beta-hairpin is found that lines the wall of the exit tunnel in the center of the 70S ribosome. In Ruegeria sp. (strain TM1040) (Silicibacter sp.), this protein is Large ribosomal subunit protein uL22.